A 246-amino-acid chain; its full sequence is Probable fimbrial chaperone YadV (246 aa).

Positions 1–25 are cleaved as a signal peptide; that stretch reads MFFNTKHTTALCFVTCMAFSSSSIA.

Belongs to the periplasmic pilus chaperone family.

The protein resides in the periplasm. Part of the yadCKLM-htrE-yadVN fimbrial operon. Could contribute to adhesion to various surfaces in specific environmental niches. The chain is Probable fimbrial chaperone YadV (yadV) from Escherichia coli (strain K12).